We begin with the raw amino-acid sequence, 502 residues long: Nucleolar GTP-binding protein 2 (502 aa).

The interval 1–20 (MGTAKKEQQRRIREGNTKDG) is disordered. The CP-type G domain occupies 211-372 (WNELYKVIDS…LIDCPGIVPP (162 aa)). GTP-binding positions include 321 to 328 (GYPNTGKS) and 365 to 369 (DCPGI). Residues 459-502 (GKIPWFVSPPDRDPQPETSKRPADSEPETAQEAPEPPANKRLRV) are disordered. Residues 468–482 (PDRDPQPETSKRPAD) are compositionally biased toward basic and acidic residues.

This sequence belongs to the TRAFAC class YlqF/YawG GTPase family. NOG2 subfamily.

The protein resides in the nucleus. Its subcellular location is the nucleolus. Its function is as follows. GTPase that associates with pre-60S ribosomal subunits in the nucleolus and is required for their nuclear export and maturation. The sequence is that of Nucleolar GTP-binding protein 2 (NOG2) from Eremothecium gossypii (strain ATCC 10895 / CBS 109.51 / FGSC 9923 / NRRL Y-1056) (Yeast).